The sequence spans 308 residues: MNQPLQHTTVLLDEAVHALLGDGDAPAGTFVDGTFGRGGHSRLILQRLGPQGRLVAFDKDTEAIQAAARITDARFSIRHQGFSHLGELPAASVSGVLLDLGVSSPQIDDPQRGFSFRFDGPLDMRMDTTRGQSVAEWLADAEAAQIAEVIRDYGEERFAGPIAKAIVARRTERGPISSTAELADIVAGAVKTREPGQNPATRTFQALRIFINAELEELQQALEGSLRVLRPGGRLVVISFHSLEDRIVKQFIAQHSKEVYDRRAPFAPPQPMRLKALERIKPSTDEVAANARARSAVMRVAERTEVPA.

Residues 38–40 (GGH), Asp58, Phe82, Asp99, and Gln106 each bind S-adenosyl-L-methionine.

Belongs to the methyltransferase superfamily. RsmH family.

Its subcellular location is the cytoplasm. The enzyme catalyses cytidine(1402) in 16S rRNA + S-adenosyl-L-methionine = N(4)-methylcytidine(1402) in 16S rRNA + S-adenosyl-L-homocysteine + H(+). Its function is as follows. Specifically methylates the N4 position of cytidine in position 1402 (C1402) of 16S rRNA. The chain is Ribosomal RNA small subunit methyltransferase H from Acidovorax ebreus (strain TPSY) (Diaphorobacter sp. (strain TPSY)).